Reading from the N-terminus, the 332-residue chain is Casein kinase II subunit alpha (332 aa).

The 285-residue stretch at 43–327 folds into the Protein kinase domain; the sequence is YEIIRKVGRG…TCQEAMAHPY (285 aa). ATP-binding positions include 49–57 and Lys-72; that span reads VGRGKYSEV. Asp-160 (proton acceptor) is an active-site residue.

It belongs to the protein kinase superfamily. Ser/Thr protein kinase family. CK2 subfamily. In terms of assembly, tetramer composed of two alpha chains, one beta chain and one beta' chain.

The enzyme catalyses L-seryl-[protein] + ATP = O-phospho-L-seryl-[protein] + ADP + H(+). It catalyses the reaction L-threonyl-[protein] + ATP = O-phospho-L-threonyl-[protein] + ADP + H(+). Catalytic subunit of a constitutively active serine/threonine-protein kinase complex that phosphorylates a large number of substrates containing acidic residues C-terminal to the phosphorylated serine or threonine. This Schizosaccharomyces pombe (strain 972 / ATCC 24843) (Fission yeast) protein is Casein kinase II subunit alpha.